The sequence spans 1021 residues: Sodium/potassium-transporting ATPase subunit alpha-1 (1021 aa).

Residues 1–5 constitute a propeptide that is removed on maturation; the sequence is MGKGV. Over residues 1–11 the composition is skewed to basic and acidic residues; the sequence is MGKGVGRDKYE. The tract at residues 1–37 is disordered; sequence MGKGVGRDKYEPAAVSEHGDKKKAKKERDMDELKKEV. Residues 6–85 are Cytoplasmic-facing; sequence GRDKYEPAAV…NALTPPPTTP (80 aa). An N6-acetyllysine modification is found at Lys9. Tyr10 is subject to Phosphotyrosine. The residue at position 16 (Ser16) is a Phosphoserine; by PKC. At Lys21 the chain carries N6-acetyllysine. Over residues 26-37 the composition is skewed to basic and acidic residues; the sequence is KERDMDELKKEV. Phosphoserine occurs at positions 38 and 45. Residues 80 to 82 form a phosphoinositide-3 kinase binding region; that stretch reads PPP. Residues 86-106 traverse the membrane as a helical segment; that stretch reads EWVKFCRQLFGGFSMLLWIGA. The Extracellular portion of the chain corresponds to 107-129; the sequence is ILCFLAYGIQAATEEEPQNDNLY. Residues 130–150 traverse the membrane as a helical segment; the sequence is LGVVLSAVVIITGCFSYYQEA. At 151-286 the chain is on the cytoplasmic side; it reads KSSKIMESFK…GGQTPIAAEI (136 aa). Residues 214–233 form a disordered region; sequence SSLTGESEPQTRSPDFTNEN. Ser226 is subject to Phosphoserine. Phosphotyrosine is present on Tyr258. A helical membrane pass occupies residues 287–306; that stretch reads EHFIHIITGVAVFLGVSFFI. Topologically, residues 307 to 318 are extracellular; the sequence is LSLILEYTWLEA. A helical membrane pass occupies residues 319 to 336; the sequence is VIFLIGIIVANVPEGLLA. Topologically, residues 337–770 are cytoplasmic; the sequence is TVTVCLTLTA…EEGRLIFDNL (434 aa). The 4-aspartylphosphate intermediate role is filled by Asp374. Phosphoserine occurs at positions 450 and 482. Lys485 contacts ATP. Tyr540 carries the phosphotyrosine modification. The tract at residues 594–715 is mediates interaction with SCN7A; the sequence is RAAVPDAVGK…QGAIVAVTGD (122 aa). Lys659 is subject to N6-succinyllysine. Ser666 and Ser673 each carry phosphoserine. Residues Asp715 and Asp719 each contribute to the Mg(2+) site. Residues 771 to 790 form a helical membrane-spanning segment; that stretch reads KKSIAYTLTSNIPEITPFLI. At 791–800 the chain is on the extracellular side; the sequence is FIIANIPLPL. The chain crosses the membrane as a helical span at residues 801 to 821; the sequence is GTVTILCIDLGTDMVPAISLA. Residues 822-841 lie on the Cytoplasmic side of the membrane; sequence YEQAESDIMKRQPRNPKTDK. The helical transmembrane segment at 842–864 threads the bilayer; that stretch reads LVNEQLISMAYGQIGMIQALGGF. The Extracellular portion of the chain corresponds to 865 to 916; that stretch reads FTYFVILAENGFLPIHLLGLRVNWDDRWINDVEDSYGQQWTYEQRKIVEFTC. Residues 917–936 traverse the membrane as a helical segment; sequence HTPFFVTIVVVQWADLVICK. The Cytoplasmic portion of the chain corresponds to 937–949; sequence TRRNSVFQQGMKN. Ser941 bears the Phosphoserine; by PKA mark. The helical transmembrane segment at 950–968 threads the bilayer; it reads KILIFGLFEETALAAFLSY. Residues 969–983 are Extracellular-facing; it reads CPGMGVALRMYPLKP. The chain crosses the membrane as a helical span at residues 984–1004; that stretch reads TWWFCAFPYSLLIFVYDEVRK. Over 1005–1021 the chain is Cytoplasmic; the sequence is LIIRRRPGGWVEKETYY.

It belongs to the cation transport ATPase (P-type) (TC 3.A.3) family. Type IIC subfamily. As to quaternary structure, the sodium/potassium-transporting ATPase is composed of a catalytic alpha subunit, an auxiliary non-catalytic beta subunit and an additional regulatory subunit. Interacts with regulatory subunit FXYD1. Interacts with regulatory subunit FXYD3. Interacts with SIK1. Interacts with SLC35G1 and STIM1. Interacts with CLN3; this interaction regulates the sodium/potassium-transporting ATPase complex localization at the plasma membrane. Interacts with SCN7A; activates ATP1A1 P-type sodium:potassium-exchanging transporter activity which indirectly signals to nearby neurons to regulate sodium homeostasis. Phosphorylation on Tyr-10 modulates pumping activity. Phosphorylation of Ser-941 by PKA modulates the response of ATP1A1 to PKC. Dephosphorylation by protein phosphatase 2A (PP2A) following increases in intracellular sodium, leading to increase catalytic activity.

The protein resides in the cell membrane. Its subcellular location is the basolateral cell membrane. It localises to the sarcolemma. The protein localises to the cell projection. It is found in the axon. The protein resides in the melanosome. It carries out the reaction K(+)(out) + Na(+)(in) + ATP + H2O = K(+)(in) + Na(+)(out) + ADP + phosphate + H(+). In terms of biological role, this is the catalytic component of the active enzyme, which catalyzes the hydrolysis of ATP coupled with the exchange of sodium and potassium ions across the plasma membrane. This action creates the electrochemical gradient of sodium and potassium ions, providing the energy for active transport of various nutrients. Could also be part of an osmosensory signaling pathway that senses body-fluid sodium levels and controls salt intake behavior as well as voluntary water intake to regulate sodium homeostasis. The chain is Sodium/potassium-transporting ATPase subunit alpha-1 (ATP1A1) from Sus scrofa (Pig).